Consider the following 327-residue polypeptide: Acetyl-coenzyme A carboxylase carboxyl transferase subunit beta (327 aa).

The 270-residue stretch at Leu24–Pro293 folds into the CoA carboxyltransferase N-terminal domain. The span at Pro293–Gly311 shows a compositional bias: low complexity. Residues Pro293–Ala327 form a disordered region. Over residues Ala312 to Ala327 the composition is skewed to pro residues.

Belongs to the AccD/PCCB family. Acetyl-CoA carboxylase is a heterohexamer composed of biotin carboxyl carrier protein (AccB), biotin carboxylase (AccC) and two subunits each of ACCase subunit alpha (AccA) and ACCase subunit beta (AccD).

Its subcellular location is the cytoplasm. It carries out the reaction N(6)-carboxybiotinyl-L-lysyl-[protein] + acetyl-CoA = N(6)-biotinyl-L-lysyl-[protein] + malonyl-CoA. It functions in the pathway lipid metabolism; malonyl-CoA biosynthesis; malonyl-CoA from acetyl-CoA: step 1/1. Functionally, component of the acetyl coenzyme A carboxylase (ACC) complex. Biotin carboxylase (BC) catalyzes the carboxylation of biotin on its carrier protein (BCCP) and then the CO(2) group is transferred by the transcarboxylase to acetyl-CoA to form malonyl-CoA. This Rhodopseudomonas palustris (strain ATCC BAA-98 / CGA009) protein is Acetyl-coenzyme A carboxylase carboxyl transferase subunit beta.